A 480-amino-acid chain; its full sequence is Transmembrane protein 161A (480 aa).

An N-terminal signal peptide occupies residues 1 to 28; sequence MAVLGVQLVVTLFTATLMHRLAPHCSFA. Residues 29-98 are Extracellular-facing; it reads RWLLCNGSLF…LTAVDALVLR (70 aa). Asn34 is a glycosylation site (N-linked (GlcNAc...) asparagine). A helical transmembrane segment spans residues 99 to 119; sequence FFLEYQWFVDFAVYSVGVYLF. Topologically, residues 120–134 are cytoplasmic; it reads TEAYYFVLGPVQETN. Residues 135 to 155 form a helical membrane-spanning segment; that stretch reads IAVFWCLLTLAFSLKVFLMVT. Residues 156-166 lie on the Extracellular side of the membrane; the sequence is RLYFSTKEGGE. The helical transmembrane segment at 167–187 threads the bilayer; that stretch reads RSVCLSFAFLFLLLAMLVQVV. Residues 188 to 224 are Cytoplasmic-facing; it reads REETLELGLEPGLASMTQHLEPILKKQDWDWTLPVIK. Residues 225–245 traverse the membrane as a helical segment; the sequence is LAIRLGLAVLGSLLGAFLIFP. At 246-263 the chain is on the extracellular side; the sequence is GLRLAQTHQDALTLSADR. A helical transmembrane segment spans residues 264–284; it reads PLLQLLLHTSFLSPLCTLWLW. Residues 285 to 304 lie on the Cytoplasmic side of the membrane; that stretch reads TKPVARDFLYQAPTRNMTFS. Residues 305-325 traverse the membrane as a helical segment; the sequence is VPSEGAFDSLRLWVLVALCLL. At 326–370 the chain is on the extracellular side; it reads RLAVTRPHLQAYLCLAKARVEQLRKEAGRIEAREIQQRVVRVYCY. Residues 371–391 traverse the membrane as a helical segment; sequence VTVVSLQYLTPLILTLHCTLL. Residues 392 to 450 lie on the Cytoplasmic side of the membrane; it reads LKTLGGYSWALSSTPPPLAPSQPSEALIPVDPAGDEAQQTAAQVAGILGGLLTPLFLRG. The chain crosses the membrane as a helical span at residues 451-473; the sequence is MLAYIIWWTAACQLLSSLFGLYF. The Extracellular segment spans residues 474–480; the sequence is HQHLAAS.

This sequence belongs to the TMEM161 family.

Its subcellular location is the membrane. In terms of biological role, may play a role in protection against oxidative stress. Overexpression leads to reduced levels of oxidant-induced DNA damage and apoptosis. This is Transmembrane protein 161A (Tmem161a) from Mus musculus (Mouse).